Consider the following 98-residue polypeptide: NADH-ubiquinone oxidoreductase chain 4L (98 aa).

3 helical membrane-spanning segments follow: residues 2 to 22 (TQAS…TLIF), 29 to 49 (TLLC…MTAL), and 61 to 81 (IVML…LAMI).

Belongs to the complex I subunit 4L family. As to quaternary structure, core subunit of respiratory chain NADH dehydrogenase (Complex I) which is composed of 45 different subunits.

The protein resides in the mitochondrion inner membrane. It catalyses the reaction a ubiquinone + NADH + 5 H(+)(in) = a ubiquinol + NAD(+) + 4 H(+)(out). Functionally, core subunit of the mitochondrial membrane respiratory chain NADH dehydrogenase (Complex I) which catalyzes electron transfer from NADH through the respiratory chain, using ubiquinone as an electron acceptor. Part of the enzyme membrane arm which is embedded in the lipid bilayer and involved in proton translocation. The polypeptide is NADH-ubiquinone oxidoreductase chain 4L (MT-ND4L) (Calomys musculinus (Drylands vesper mouse)).